We begin with the raw amino-acid sequence, 460 residues long: Argininosuccinate lyase (460 aa).

The protein belongs to the lyase 1 family. Argininosuccinate lyase subfamily.

It is found in the cytoplasm. The enzyme catalyses 2-(N(omega)-L-arginino)succinate = fumarate + L-arginine. The protein operates within amino-acid biosynthesis; L-arginine biosynthesis; L-arginine from L-ornithine and carbamoyl phosphate: step 3/3. This Desulforamulus reducens (strain ATCC BAA-1160 / DSM 100696 / MI-1) (Desulfotomaculum reducens) protein is Argininosuccinate lyase.